Here is a 385-residue protein sequence, read N- to C-terminus: Pectate lyase E (385 aa).

Positions 1 to 30 (MKNTRVRSIGTKSLLAAVVTAALMATSAYA) are cleaved as a signal peptide. Residue aspartate 164 coordinates Ca(2+). Repeat 1 spans residues 177–182 (DHVTIS). The 2 X 6 AA approximate repeats stretch occupies residues 177 to 218 (DHVTISDGSFTDDKYTTKDGEKYVQHDGALDIKKGSDYVTIS). Aspartate 207 is a Ca(2+) binding site. The stretch at 213–218 (DYVTIS) is repeat 2. Arginine 260 is an active-site residue.

The protein belongs to the polysaccharide lyase 1 family. PLBC subfamily. Ca(2+) serves as cofactor.

The protein localises to the secreted. The enzyme catalyses Eliminative cleavage of (1-&gt;4)-alpha-D-galacturonan to give oligosaccharides with 4-deoxy-alpha-D-galact-4-enuronosyl groups at their non-reducing ends.. Its pathway is glycan metabolism; pectin degradation; 2-dehydro-3-deoxy-D-gluconate from pectin: step 2/5. Functionally, involved in maceration and soft-rotting of plant tissue. The polypeptide is Pectate lyase E (pelE) (Dickeya chrysanthemi (Pectobacterium chrysanthemi)).